The primary structure comprises 179 residues: Large ribosomal subunit protein uL16m (179 aa).

This sequence belongs to the universal ribosomal protein uL16 family. In terms of assembly, component of the mitochondrial ribosome large subunit.

The protein resides in the mitochondrion. This Arabidopsis thaliana (Mouse-ear cress) protein is Large ribosomal subunit protein uL16m (RPL16).